A 211-amino-acid polypeptide reads, in one-letter code: Protein-L-isoaspartate O-methyltransferase (211 aa).

The active site involves Ser62.

The protein belongs to the methyltransferase superfamily. L-isoaspartyl/D-aspartyl protein methyltransferase family.

The protein resides in the cytoplasm. It carries out the reaction [protein]-L-isoaspartate + S-adenosyl-L-methionine = [protein]-L-isoaspartate alpha-methyl ester + S-adenosyl-L-homocysteine. Functionally, catalyzes the methyl esterification of L-isoaspartyl residues in peptides and proteins that result from spontaneous decomposition of normal L-aspartyl and L-asparaginyl residues. It plays a role in the repair and/or degradation of damaged proteins. The sequence is that of Protein-L-isoaspartate O-methyltransferase from Shewanella putrefaciens (strain CN-32 / ATCC BAA-453).